Here is a 1499-residue protein sequence, read N- to C-terminus: Rho GTPase-activating protein 35 (1499 aa).

Residues 1–266 (MMMARKQDVR…IPYFEALKQQ (266 aa)) form a has GTPase activity, required for proper localization region. GTP-binding positions include Lys28, 33–37 (IGKSC), Leu52, Ser56, 95–97 (EQT), 201–203 (KCD), and 229–231 (SAR). 4 FF domains span residues 270–327 (IATA…HIHR), 368–422 (KLLE…HLEK), 429–483 (RAEM…HQKQ), and 485–550 (IDRA…HIHF). A Phosphotyrosine modification is found at Tyr308. Ser589 is modified (phosphoserine). The pG1 pseudoGTPase domain occupies 592 to 767 (DPNIDRINLV…LLDSKRNLNL (176 aa)). A phosphoserine mark is found at Ser770 and Ser773. The pG2 pseudoGTPase domain maps to 783–947 (RIVMCLMCGD…FKDVVEKKNI (165 aa)). 4 positions are modified to phosphoserine: Ser970, Ser975, Ser985, and Ser1072. Tyr1087 bears the Phosphotyrosine mark. Residue Tyr1105 is modified to Phosphotyrosine; by ABL2 and PTK6. A compositionally biased stretch (polar residues) spans 1124–1141 (KAQSNGSGNGSDSEMDTS). Residues 1124-1148 (KAQSNGSGNGSDSEMDTSSLERGRK) form a disordered region. 6 positions are modified to phosphoserine: Ser1134, Ser1142, Ser1150, Ser1176, Ser1179, and Ser1221. Residues 1177-1207 (VGSDDELGPIRKKEEDQASQGYKGDNAVIPY) form a disordered region. Residues 1213–1236 (PRRRNILRSLRRNTKKPKPKPRPS) are required for phospholipid binding and regulation of the substrate preference. Position 1226 is a phosphothreonine (Thr1226). A Phosphoserine modification is found at Ser1236. A Rho-GAP domain is found at 1249–1436 (VPLTTVVTPE…LFIQQCPFFF (188 aa)). Residues 1446-1499 (GAAPGSPSAMAPTVPFLTSTPATSQPSPPQSPPPTPQSPMQPLLSSQLQAEHTL) form a disordered region. Residues 1448–1470 (APGSPSAMAPTVPFLTSTPATSQ) are compositionally biased toward low complexity. Positions 1471–1484 (PSPPQSPPPTPQSP) are enriched in pro residues. 2 positions are modified to phosphoserine: Ser1472 and Ser1476. Residue Thr1480 is modified to Phosphothreonine. At Ser1483 the chain carries Phosphoserine. Residues 1485 to 1499 (MQPLLSSQLQAEHTL) show a composition bias toward low complexity.

Interacts with RASA1. Interacts with the general transcription factor GTF2I, the interaction sequesters GTF2I in the cytoplasm. Post-translationally, phosphorylation of Tyr-1105 by PTK6 promotes the association with RASA1, inactivating RHOA while activating RAS. Phosphorylation at Tyr-308 by PDGFRA inhibits binding to GTF2I. Phosphorylated by PRKCA at Ser-1221 and Thr-1226, induces relocalization from the cytoplasm to regions of plasma membrane ruffling and prevents the binding and substrate specificity regulation by phospholipids. In brain, phosphorylated by FYN and SRC. During focal adhesion formation, phosphorylated by MAPK1 and MAPK3 at the C-terminal region, probably at Ser-1451, Ser-1476, Thr-1480 and Ser-1483. Phosphorylation by MAPK1 and MAPK3 inhibits GAP function and localizes ARGHAP35 away from newly forming focal adhesions and stress fibers in cells spreading on fibronectin. Phosphorylation at Ser-1476 and Thr-1480 by GSK3B requires priming by MAPK and inhibits RhoGAP activity and modulates polarized cell migration. Ubiquitously expressed.

The protein resides in the cytoplasm. It localises to the cytoskeleton. Its subcellular location is the cilium basal body. It is found in the nucleus. The protein localises to the cell membrane. Its function is as follows. Rho GTPase-activating protein (GAP). Binds several acidic phospholipids which inhibits the Rho GAP activity to promote the Rac GAP activity. This binding is inhibited by phosphorylation by PRKCA. Involved in cell differentiation as well as cell adhesion and migration, plays an important role in retinal tissue morphogenesis, neural tube fusion, midline fusion of the cerebral hemispheres and mammary gland branching morphogenesis. Transduces signals from p21-ras to the nucleus, acting via the ras GTPase-activating protein (GAP). Transduces SRC-dependent signals from cell-surface adhesion molecules, such as laminin, to promote neurite outgrowth. Regulates axon outgrowth, guidance and fasciculation. Modulates Rho GTPase-dependent F-actin polymerization, organization and assembly, is involved in polarized cell migration and in the positive regulation of ciliogenesis and cilia elongation. During mammary gland development, is required in both the epithelial and stromal compartments for ductal outgrowth. Represses transcription of the glucocorticoid receptor by binding to the cis-acting regulatory sequence 5'-GAGAAAAGAAACTGGAGAAACTC-3'; this function is however unclear and would need additional experimental evidences. In Rattus norvegicus (Rat), this protein is Rho GTPase-activating protein 35.